A 360-amino-acid chain; its full sequence is MKNIFLHSLSLENYRNFKNLELKTDNTPIILIGENGSGKTNILEAISLFYPGRGLRSAKLADICKTSEDHCLVKALLQSKLGLAEFTTQFKRSSNRRITEYNESKIANNELSKFTSMVWLTPHMEGIFTSSSSDRRKFLDRIVYNFDPKHTELVSKYEYYMHERNKILVEDIRDDNWLKIIEEKMADISNHIANNRLKTLEFMQHAIDDLENEFPKADLSIDGIVEQKILNGEENIVSFITAELYQTRNNDKLLGRTSFGVHKSDFLVKHQKKNILAKFCSTGEQKAILIAIILAEMNYAIKLTKIAPILLLDEVFVHLDDKRRQYLIEFFTGLNMQLWVTTTNLEGIENFATKAQLIKL.

33-40 (GENGSGKT) lines the ATP pocket.

This sequence belongs to the RecF family.

It is found in the cytoplasm. The RecF protein is involved in DNA metabolism; it is required for DNA replication and normal SOS inducibility. RecF binds preferentially to single-stranded, linear DNA. It also seems to bind ATP. This is DNA replication and repair protein RecF from Rickettsia massiliae (strain Mtu5).